A 63-amino-acid chain; its full sequence is MGCGNSTATSAAAGRGKPGAVKDATEDSITEDDKRRNYGGVYVGLPSEAVNIASSQAKTVQKS.

Polar residues predominate over residues 1-10 (MGCGNSTATS). Positions 1-37 (MGCGNSTATSAAAGRGKPGAVKDATEDSITEDDKRRN) are disordered.

It belongs to the OCC1 family.

This chain is Overexpressed in colon carcinoma 1 protein homolog, found in Rattus norvegicus (Rat).